A 1146-amino-acid polypeptide reads, in one-letter code: ATP-dependent helicase/deoxyribonuclease subunit B (1146 aa).

Positions 1 to 280 (MSLRFIYGRA…LNSKPLFRFS (280 aa)) constitute a UvrD-like helicase ATP-binding domain. 8–15 (GRAGSGKT) lines the ATP pocket. The UvrD-like helicase C-terminal domain occupies 276–584 (LFRFSQSPEL…LVGSLERSRS (309 aa)). 4 residues coordinate [4Fe-4S] cluster: Cys786, Cys1105, Cys1108, and Cys1114.

Belongs to the helicase family. AddB/RexB type 1 subfamily. Heterodimer of AddA and AddB. It depends on Mg(2+) as a cofactor. Requires [4Fe-4S] cluster as cofactor.

Its function is as follows. The heterodimer acts as both an ATP-dependent DNA helicase and an ATP-dependent, dual-direction single-stranded exonuclease. Recognizes the chi site generating a DNA molecule suitable for the initiation of homologous recombination. The AddB subunit has 5' -&gt; 3' nuclease activity but not helicase activity. This is ATP-dependent helicase/deoxyribonuclease subunit B from Acetivibrio thermocellus (strain ATCC 27405 / DSM 1237 / JCM 9322 / NBRC 103400 / NCIMB 10682 / NRRL B-4536 / VPI 7372) (Clostridium thermocellum).